The following is an 883-amino-acid chain: Phosphoenolpyruvate carboxylase (883 aa).

Residues His138 and Lys546 contribute to the active site.

The protein belongs to the PEPCase type 1 family. The cofactor is Mg(2+).

It catalyses the reaction oxaloacetate + phosphate = phosphoenolpyruvate + hydrogencarbonate. Forms oxaloacetate, a four-carbon dicarboxylic acid source for the tricarboxylic acid cycle. This is Phosphoenolpyruvate carboxylase from Salmonella dublin (strain CT_02021853).